A 276-amino-acid chain; its full sequence is Cholesterol 25-hydroxylase-like protein 1, member 2 (276 aa).

The N-linked (GlcNAc...) asparagine glycan is linked to Asn30. Transmembrane regions (helical) follow at residues 39–59 (LFPVVLTVSSYFVLVLPYLSC), 90–110 (GVTLYNHILLVIPAAVAQWMW), and 126–146 (LVGGVTGNLLLFDLQYFIWHF). A Fatty acid hydroxylase domain is found at 134–265 (LLLFDLQYFI…FSHWDKMFGT (132 aa)). The short motif at 144 to 148 (WHFLH) is the Histidine box-1 element. The short motif at 159-163 (HAIHH) is the Histidine box-2 element. Asn164 carries an N-linked (GlcNAc...) asparagine glycan. The next 2 helical transmembrane spans lie at 175–195 (CLGGWELVTVGFWTTLNPVLL) and 199–219 (LLTTWMFMVVHVYVSVEDHCG). The Histidine box-3 motif lies at 240–246 (KHDVHHQ).

It belongs to the sterol desaturase family. Fe cation is required as a cofactor.

The protein localises to the endoplasmic reticulum membrane. Its function is as follows. May catalyze the formation of 25-hydroxycholesterol from cholesterol. This is Cholesterol 25-hydroxylase-like protein 1, member 2 from Danio rerio (Zebrafish).